We begin with the raw amino-acid sequence, 733 residues long: Zinc finger protein indra (733 aa).

Positions 17–91 (VRCDHCGTSQ…RETVDRVQEQ (75 aa)) constitute a ZAD domain. Zn(2+)-binding residues include cysteine 19, cysteine 22, cysteine 64, and cysteine 67. Positions 90-100 (EQPAKKTKVAE) are enriched in basic and acidic residues. The interval 90 to 121 (EQPAKKTKVAEIEEPSTQESDKKAVKVPKKNT) is disordered. 3 positions are modified to phosphoserine: serine 109, serine 153, and serine 176. Residues threonine 180 and threonine 188 each carry the phosphothreonine modification. 2 C2H2-type zinc fingers span residues 228–251 (FQCP…QKEH) and 259–282 (YPCT…RDTH). Residues 285-316 (TFESEAKTKAKESKEKEAKSGAKNKIDAKAKE) show a composition bias toward basic and acidic residues. The interval 285 to 336 (TFESEAKTKAKESKEKEAKSGAKNKIDAKAKETNAVSQRKKPKEKKSKEKKT) is disordered. 2 consecutive C2H2-type zinc fingers follow at residues 416–439 (FQCE…KTVH) and 447–469 (FKCH…MTLH). Disordered regions lie at residues 499–525 (IENT…FTNR) and 540–622 (AFKT…SSDV). The span at 592 to 602 (SVSTTNGNSPA) shows a compositional bias: polar residues. Phosphoserine is present on residues serine 600, serine 642, and serine 646. Threonine 647 is subject to Phosphothreonine. 2 consecutive C2H2-type zinc fingers follow at residues 653–676 (LSCD…EKKH) and 708–733 (LPCG…RKRH). Serine 654 bears the Phosphoserine mark.

Belongs to the krueppel C2H2-type zinc-finger protein family.

Its subcellular location is the nucleus. It is found in the nucleolus. Functionally, required for rDNA copy number maintenance and non-random sister chromatid segregation (NRSS) following unequal sister chromatid exchange. Binds ribosomal DNA (rDNA) preferentially binding to intergenic spacers (IGS) regions on both X and Y chromosomes. Essential for NRSS, a mechanism which contributes to the recovery and maintenance of inherently unstable rDNA copy numbers so that the integrity of the germline genome is upheld over generations and germline immortality is sustained. May be involved in transcriptional regulation. The chain is Zinc finger protein indra from Drosophila melanogaster (Fruit fly).